Here is a 475-residue protein sequence, read N- to C-terminus: ATP synthase subunit beta (475 aa).

148 to 155 (GGAGVGKT) lines the ATP pocket.

It belongs to the ATPase alpha/beta chains family. As to quaternary structure, F-type ATPases have 2 components, CF(1) - the catalytic core - and CF(0) - the membrane proton channel. CF(1) has five subunits: alpha(3), beta(3), gamma(1), delta(1), epsilon(1). CF(0) has three main subunits: a(1), b(2) and c(9-12). The alpha and beta chains form an alternating ring which encloses part of the gamma chain. CF(1) is attached to CF(0) by a central stalk formed by the gamma and epsilon chains, while a peripheral stalk is formed by the delta and b chains.

Its subcellular location is the cell inner membrane. The catalysed reaction is ATP + H2O + 4 H(+)(in) = ADP + phosphate + 5 H(+)(out). Produces ATP from ADP in the presence of a proton gradient across the membrane. The catalytic sites are hosted primarily by the beta subunits. This is ATP synthase subunit beta from Psychrobacter sp. (strain PRwf-1).